The sequence spans 304 residues: MKIGTRGSKLALAQAYLTRRLLQEAHGLPEDAIEILPMSTAGDRIQDRPLSEVGGKGLFTEEIEQALKDGRIDIAVHSTKDMPTVLPEGLHLSVFLEREDPRDAFIGRSARRFMDLPQGATVGSSSLRRQALIRRLRPDIEVVMYRGNVDTRLRKLDAGEVDGTFLACAGLRRLGLADVITDLLDPSVFPPAPGQGAIGIESRIGDERIDVLLAPLAHRETQIALACERAFLGALDGSCRTPIAGLATVEGDRLSFRGMILTPDGRQAHEVTAEGVVSDAAALGTDAANRVRAMAGPHFFDGWQ.

Cysteine 239 carries the post-translational modification S-(dipyrrolylmethanemethyl)cysteine.

Belongs to the HMBS family. Monomer. Dipyrromethane is required as a cofactor.

The catalysed reaction is 4 porphobilinogen + H2O = hydroxymethylbilane + 4 NH4(+). It functions in the pathway porphyrin-containing compound metabolism; protoporphyrin-IX biosynthesis; coproporphyrinogen-III from 5-aminolevulinate: step 2/4. Its function is as follows. Tetrapolymerization of the monopyrrole PBG into the hydroxymethylbilane pre-uroporphyrinogen in several discrete steps. This chain is Porphobilinogen deaminase, found in Brucella ovis (strain ATCC 25840 / 63/290 / NCTC 10512).